Here is a 151-residue protein sequence, read N- to C-terminus: Ribosome maturation factor RimP (151 aa).

The protein belongs to the RimP family.

The protein localises to the cytoplasm. Its function is as follows. Required for maturation of 30S ribosomal subunits. This chain is Ribosome maturation factor RimP, found in Vibrio campbellii (strain ATCC BAA-1116).